The following is a 498-amino-acid chain: ATP synthase subunit beta, chloroplastic (498 aa).

Thr-6 carries the post-translational modification Phosphothreonine. Ser-13 bears the Phosphoserine mark. 172–179 provides a ligand contact to ATP; it reads GGAGVGKT.

It belongs to the ATPase alpha/beta chains family. F-type ATPases have 2 components, CF(1) - the catalytic core - and CF(0) - the membrane proton channel. CF(1) has five subunits: alpha(3), beta(3), gamma(1), delta(1), epsilon(1). CF(0) has four main subunits: a(1), b(1), b'(1) and c(9-12).

It is found in the plastid. Its subcellular location is the chloroplast thylakoid membrane. The catalysed reaction is ATP + H2O + 4 H(+)(in) = ADP + phosphate + 5 H(+)(out). Its function is as follows. Produces ATP from ADP in the presence of a proton gradient across the membrane. The catalytic sites are hosted primarily by the beta subunits. The polypeptide is ATP synthase subunit beta, chloroplastic (Olimarabidopsis pumila (Dwarf rocket)).